The chain runs to 451 residues: MPPLDTIAAVATAVAPGQGGIAVIRLSGPVAEQVAQAVVQCPGHQEWGSHRILYGHVMAVDGQRRLDEVLLLLMRAPRSFTGEDVVEIHCHGGVMAVQQVLERVLEHPGVRRALPGEFSQRAVLNGRLDLTQAEAVSELVSARSRRAADLAMAGLDGGIQARITVLRERLLDQLTELEARVDFEDDLPPLDGTALLNELQAVRVELLALVADGERGDALRHGLRVALVGRPNVGKSSLLNRLSRRERAIVTELPGTTRDLLESEIVLDGVPITLMDTAGIRATNDAVEQLGIARSEEALISADVVVLIVDGHAGWTETDAQLLARIPNDVPRVVVANKSDLDGPPLPGLVDVQFSALNGAGEDAFVQVLLERCGAGDAAGIVLSLNTRQRDLASVAAAALERSHEVAQQQLPWDFWTIDLREAIRGLGEITGEELTEAVLERVFSRFCIGK.

(6S)-5-formyl-5,6,7,8-tetrahydrofolate-binding residues include arginine 25, glutamate 87, and arginine 127. A TrmE-type G domain is found at 222–374 (GLRVALVGRP…FVQVLLERCG (153 aa)). Asparagine 232 is a binding site for K(+). Residues 232 to 237 (NVGKSS), 251 to 257 (TELPGTT), and 276 to 279 (DTAG) contribute to the GTP site. Serine 236 provides a ligand contact to Mg(2+). The K(+) site is built by threonine 251, leucine 253, and threonine 256. Threonine 257 is a binding site for Mg(2+). Position 451 (lysine 451) interacts with (6S)-5-formyl-5,6,7,8-tetrahydrofolate.

The protein belongs to the TRAFAC class TrmE-Era-EngA-EngB-Septin-like GTPase superfamily. TrmE GTPase family. As to quaternary structure, homodimer. Heterotetramer of two MnmE and two MnmG subunits. Requires K(+) as cofactor.

Its subcellular location is the cytoplasm. Functionally, exhibits a very high intrinsic GTPase hydrolysis rate. Involved in the addition of a carboxymethylaminomethyl (cmnm) group at the wobble position (U34) of certain tRNAs, forming tRNA-cmnm(5)s(2)U34. This chain is tRNA modification GTPase MnmE, found in Synechococcus sp. (strain CC9902).